A 107-amino-acid chain; its full sequence is U1-lycotoxin-Ls1b (107 aa).

The signal sequence occupies residues 1 to 20; sequence MMKVLVVVALLVTLISYSSS. A propeptide spanning residues 21–41 is cleaved from the precursor; sequence EGIDDLEADELSSLMANEQTR. 4 cysteine pairs are disulfide-bonded: Cys-44-Cys-59, Cys-51-Cys-68, Cys-58-Cys-86, and Cys-70-Cys-84.

Belongs to the neurotoxin 19 (CSTX) family. 04 (U1-Lctx) subfamily. In terms of tissue distribution, expressed by the venom gland.

The protein localises to the secreted. The sequence is that of U1-lycotoxin-Ls1b from Lycosa singoriensis (Wolf spider).